A 745-amino-acid polypeptide reads, in one-letter code: Double-stranded RNA-specific editase B2 (745 aa).

Disordered stretches follow at residues 1–35 (MASV…RKDK) and 50–104 (SPGT…PLEE). Positions 20–34 (CKSKRRRRRRSKRKD) are enriched in basic residues. Residues 23 to 35 (KRRRRRRSKRKDK) are R-domain (ssRNA-binding). DRBM domains lie at 125–191 (TPKN…SFVQ) and 283–347 (NPVV…ALFD). An A to I editase domain is found at 414-741 (VLSSGTKCIS…VRKPPEQDQF (328 aa)). Position 438 (His-438) interacts with Zn(2+). Residue Glu-440 is the Proton donor of the active site. Positions 496 and 561 each coordinate Zn(2+).

Brain specific.

It is found in the nucleus. Its function is as follows. Lacks editing activity. It prevents the binding of other ADAR enzymes to targets in vitro, and decreases the efficiency of these enzymes. Capable of binding to dsRNA but also to ssRNA. The polypeptide is Double-stranded RNA-specific editase B2 (Adarb2) (Mus musculus (Mouse)).